The chain runs to 493 residues: Dipeptide permease D (493 aa).

At 1–13 (MNKHASQPRAIYY) the chain is on the cytoplasmic side. Residues 14–34 (VVALQIWEYFSFYGMRALLIL) form a helical membrane-spanning segment. The Periplasmic segment spans residues 35–48 (YLTNQLKYNDTHAY). A helical transmembrane segment spans residues 49 to 69 (ELFSAYCSLVYVTPILGGFLA). Over 70–77 (DKVLGNRM) the chain is Cytoplasmic. Residues 78–98 (AVMLGALLMAIGHVVLGASEI) form a helical membrane-spanning segment. Residues 99–100 (HP) are Periplasmic-facing. Residues 101-121 (SFLYLSLAIIVCGYGLFKSNV) form a helical membrane-spanning segment. The Cytoplasmic segment spans residues 122–137 (SCLLGELYEPTDPRRD). A helical membrane pass occupies residues 138-158 (GGFSLMYAAGNVGSIIAPIAC). Residues 159–166 (GYAQEEYS) lie on the Periplasmic side of the membrane. A helical transmembrane segment spans residues 167–187 (WAMGFGLAAVGMIAGLVIFLC). The Cytoplasmic segment spans residues 188–211 (GNRHFTHTRGVNKKVLRATNFLLP). Residues 212-232 (NWGWLLVLLVATPALITVLFW) form a helical membrane-spanning segment. Residues 233–234 (KE) are Periplasmic-facing. Residues 235–255 (WSVYALIVATIIGLGVLAKIY) traverse the membrane as a helical segment. The Cytoplasmic portion of the chain corresponds to 256–268 (RKAENQKQRKELR). The chain crosses the membrane as a helical span at residues 269–289 (LIVTLTFFSMLFWAFAQQGGS). Topologically, residues 290 to 311 (SISLYIDRFVNRDMFGYTVPTA) are periplasmic. The chain crosses the membrane as a helical span at residues 312-332 (MFQSINAFAVMLCGVFLAWVV). Residues 333–343 (KESVAGNRTVR) are Cytoplasmic-facing. Residues 344 to 364 (IWGKFALGLGLMSAGFCILTL) traverse the membrane as a helical segment. Residues 365 to 378 (SARWSAMYGHSSLP) are Periplasmic-facing. Residues 379 to 399 (LMVLGLAVMGFAELFIDPVAM) traverse the membrane as a helical segment. Residues 400-412 (SQITRIEIPGVTG) lie on the Cytoplasmic side of the membrane. The chain crosses the membrane as a helical span at residues 413 to 433 (VLTGIYMLLSGAIANYLAGVI). The Periplasmic segment spans residues 434 to 461 (ADQTSQASFDASGAINYSINAYIEVFDQ). A helical membrane pass occupies residues 462 to 482 (ITWGALACVGVVLMIWLYQAL). Residues 483–493 (KFRNRALALES) lie on the Cytoplasmic side of the membrane.

Belongs to the major facilitator superfamily. Proton-dependent oligopeptide transporter (POT/PTR) (TC 2.A.17) family. DtpD subfamily. As to quaternary structure, monomer in solution. Exhibits a doughnut-like shape with a central, shallow depression and has a diameter of 8 nm.

It localises to the cell inner membrane. Probable proton-dependent permease that transports dipeptides. The polypeptide is Dipeptide permease D (dtpD) (Escherichia coli O157:H7).